Consider the following 445-residue polypeptide: FAS-associated factor 2 (445 aa).

The residue at position 2 (Ala2) is an N-acetylalanine. In terms of domain architecture, UBA spans Glu12 to Gln48. Residue Lys167 is modified to N6-acetyllysine. The stretch at Ser275–Leu350 forms a coiled coil. A disordered region spans residues Ala299–Ser361. Over residues Ala303–Glu348 the composition is skewed to basic and acidic residues. A UBX domain is found at Asp357–Val439.

In terms of assembly, identified in a complex that contains SEL1L, OS9, FAF2/UBXD8, UBE2J1/UBC6E and AUP1. Interacts with YOD1. Interacts (via N-terminus) with UBQLN2 (via C-terminus). Interacts with PNPLA2 and UBAC2. Interacts with ZFAND2B; probably through VCP. Interacts with LMBR1L. Broadly expressed, with highest levels in brain.

It is found in the cytoplasm. The protein localises to the lipid droplet. Its subcellular location is the endoplasmic reticulum. Its function is as follows. Plays an important role in endoplasmic reticulum-associated degradation (ERAD) that mediates ubiquitin-dependent degradation of misfolded endoplasmic reticulum proteins. By controlling the steady-state expression of the IGF1R receptor, indirectly regulates the insulin-like growth factor receptor signaling pathway. Involved in inhibition of lipid droplet degradation by binding to phospholipase PNPL2 and inhibiting its activity by promoting dissociation of PNPL2 from its endogenous activator, ABHD5 which inhibits the rate of triacylglycerol hydrolysis. Involved in stress granule disassembly: associates with ubiquitinated G3BP1 in response to heat shock, thereby promoting interaction between ubiquitinated G3BP1 and VCP, followed by G3BP1 extraction from stress granules and stress granule disassembly. The chain is FAS-associated factor 2 from Homo sapiens (Human).